Reading from the N-terminus, the 190-residue chain is dTTP/UTP pyrophosphatase (190 aa).

Aspartate 71 (proton acceptor) is an active-site residue.

It belongs to the Maf family. YhdE subfamily. The cofactor is a divalent metal cation.

The protein localises to the cytoplasm. The enzyme catalyses dTTP + H2O = dTMP + diphosphate + H(+). The catalysed reaction is UTP + H2O = UMP + diphosphate + H(+). Its function is as follows. Nucleoside triphosphate pyrophosphatase that hydrolyzes dTTP and UTP. May have a dual role in cell division arrest and in preventing the incorporation of modified nucleotides into cellular nucleic acids. The protein is dTTP/UTP pyrophosphatase of Xanthomonas axonopodis pv. citri (strain 306).